Reading from the N-terminus, the 131-residue chain is Small ribosomal subunit protein uS9 (131 aa).

The protein belongs to the universal ribosomal protein uS9 family.

The protein is Small ribosomal subunit protein uS9 of Actinobacillus succinogenes (strain ATCC 55618 / DSM 22257 / CCUG 43843 / 130Z).